A 169-amino-acid polypeptide reads, in one-letter code: Peptide deformylase (169 aa).

The Fe cation site is built by C91 and H133. E134 is an active-site residue. H137 serves as a coordination point for Fe cation.

This sequence belongs to the polypeptide deformylase family. Fe(2+) is required as a cofactor.

The catalysed reaction is N-terminal N-formyl-L-methionyl-[peptide] + H2O = N-terminal L-methionyl-[peptide] + formate. Its function is as follows. Removes the formyl group from the N-terminal Met of newly synthesized proteins. Requires at least a dipeptide for an efficient rate of reaction. N-terminal L-methionine is a prerequisite for activity but the enzyme has broad specificity at other positions. This chain is Peptide deformylase, found in Haemophilus influenzae (strain 86-028NP).